Here is a 295-residue protein sequence, read N- to C-terminus: Shikimate dehydrogenase (NADP(+)) (295 aa).

Residues 24-26 (SRS) and T71 each bind shikimate. Catalysis depends on K75, which acts as the Proton acceptor. Position 87 (E87) interacts with NADP(+). Shikimate contacts are provided by N96 and D111. NADP(+)-binding positions include 136–140 (GAGGA), 160–165 (NRTASR), and M233. A shikimate-binding site is contributed by Y235. G256 provides a ligand contact to NADP(+).

This sequence belongs to the shikimate dehydrogenase family. As to quaternary structure, homodimer.

The catalysed reaction is shikimate + NADP(+) = 3-dehydroshikimate + NADPH + H(+). It participates in metabolic intermediate biosynthesis; chorismate biosynthesis; chorismate from D-erythrose 4-phosphate and phosphoenolpyruvate: step 4/7. Functionally, involved in the biosynthesis of the chorismate, which leads to the biosynthesis of aromatic amino acids. Catalyzes the reversible NADPH linked reduction of 3-dehydroshikimate (DHSA) to yield shikimate (SA). The chain is Shikimate dehydrogenase (NADP(+)) from Cupriavidus taiwanensis (strain DSM 17343 / BCRC 17206 / CCUG 44338 / CIP 107171 / LMG 19424 / R1) (Ralstonia taiwanensis (strain LMG 19424)).